A 234-amino-acid chain; its full sequence is NLP effector protein 1 (234 aa).

A signal peptide spans 1-18; sequence MQLRAFISVFASLACVNA. Residue asparagine 66 is glycosylated (N-linked (GlcNAc...) asparagine). Positions 102–112 match the Conserved undecapeptide motif I motif; the sequence is AFMYSWYMPKD. Residues 119–125 carry the Hepta-peptide GHRHDWE motif II motif; sequence GHRHDWE.

It belongs to the Necrosis inducing protein (NPP1) family.

Its subcellular location is the secreted. Secreted effector that contributes to virulence during infection by P.capsici. Induces distinct chlorosis at 3 days after inoculation of host C.annuum leaves, and all the chlorotic areas gradually turn brown and become moderately necrotic at 7 days after inoculation. Leads only to chlorotic areas, without necrosis at 7 days after non-host N.benthamiana leaves infection. Induces cell death in hot pepper. The chain is NLP effector protein 1 from Phytophthora capsici.